A 469-amino-acid chain; its full sequence is Probable monogalactosyldiacylglycerol synthase 2, chloroplastic (469 aa).

A chloroplast-targeting transit peptide spans 1–42 (MVISVATPRRSIRDAVLGGVLGAGGRQLYQPLRCAFYDGAAG).

It belongs to the glycosyltransferase 28 family.

It is found in the plastid. It localises to the chloroplast membrane. The catalysed reaction is a 1,2-diacyl-sn-glycerol + UDP-alpha-D-galactose = a 1,2-diacyl-3-O-(beta-D-galactosyl)-sn-glycerol + UDP + H(+). Involved in the synthesis of the major structural component of photosynthetic membranes. The sequence is that of Probable monogalactosyldiacylglycerol synthase 2, chloroplastic (MGD2) from Oryza sativa subsp. japonica (Rice).